The primary structure comprises 207 residues: Holliday junction branch migration complex subunit RuvA (207 aa).

The tract at residues 1–64 (MIGRLTGILA…ETSQQLFGFS (64 aa)) is domain I. The domain II stretch occupies residues 65–142 (SQQDRELFRM…ALDTTPSEHS (78 aa)). The flexible linker stretch occupies residues 143-157 (PTGEGAGIVRVDPVI). A domain III region spans residues 158–207 (NTNVIIADAESALIGLGYKPTEAAKAVSAAYNDTITTSEDLIRAALKGMI).

This sequence belongs to the RuvA family. In terms of assembly, homotetramer. Forms an RuvA(8)-RuvB(12)-Holliday junction (HJ) complex. HJ DNA is sandwiched between 2 RuvA tetramers; dsDNA enters through RuvA and exits via RuvB. An RuvB hexamer assembles on each DNA strand where it exits the tetramer. Each RuvB hexamer is contacted by two RuvA subunits (via domain III) on 2 adjacent RuvB subunits; this complex drives branch migration. In the full resolvosome a probable DNA-RuvA(4)-RuvB(12)-RuvC(2) complex forms which resolves the HJ.

Its subcellular location is the cytoplasm. Its function is as follows. The RuvA-RuvB-RuvC complex processes Holliday junction (HJ) DNA during genetic recombination and DNA repair, while the RuvA-RuvB complex plays an important role in the rescue of blocked DNA replication forks via replication fork reversal (RFR). RuvA specifically binds to HJ cruciform DNA, conferring on it an open structure. The RuvB hexamer acts as an ATP-dependent pump, pulling dsDNA into and through the RuvAB complex. HJ branch migration allows RuvC to scan DNA until it finds its consensus sequence, where it cleaves and resolves the cruciform DNA. This Saccharophagus degradans (strain 2-40 / ATCC 43961 / DSM 17024) protein is Holliday junction branch migration complex subunit RuvA.